The chain runs to 202 residues: LexA repressor (202 aa).

The H-T-H motif DNA-binding region spans 28–48; the sequence is RAEIAMRLGFRSPNAAEEHLK. Residues Ser-119 and Lys-156 each act as for autocatalytic cleavage activity in the active site.

This sequence belongs to the peptidase S24 family. As to quaternary structure, homodimer.

It catalyses the reaction Hydrolysis of Ala-|-Gly bond in repressor LexA.. In terms of biological role, represses a number of genes involved in the response to DNA damage (SOS response), including recA and lexA. Binds to the 16 bp palindromic sequence 5'-CTGTATATATATACAG-3'. In the presence of single-stranded DNA, RecA interacts with LexA causing an autocatalytic cleavage which disrupts the DNA-binding part of LexA, leading to derepression of the SOS regulon and eventually DNA repair. The chain is LexA repressor from Serratia proteamaculans (strain 568).